Reading from the N-terminus, the 1335-residue chain is Protein SPATA31F1 (1335 aa).

A helical transmembrane segment spans residues 8 to 28; sequence LWEVGYPLYIYGSIFIVIVII. 5 disordered regions span residues 403–424, 480–502, 972–1002, 1019–1141, and 1248–1335; these read ALKA…SGSD, LPKT…MSPS, VQQN…SGDM, PSLE…LQDS, and ENVA…GHPT. Residues 414 to 424 show a composition bias toward polar residues; the sequence is SGGQDNDSGSD. Polar residues predominate over residues 972-1000; the sequence is VQQNQKQSNSKAVPQGSAHSVSKISQPSG. Composition is skewed to basic and acidic residues over residues 1047–1064, 1071–1083, and 1129–1139; these read NRED…REGD, STRE…EDQR, and PGEKESEKDLQ.

This sequence belongs to the SPATA31 family.

Its subcellular location is the membrane. The chain is Protein SPATA31F1 from Homo sapiens (Human).